A 72-amino-acid chain; its full sequence is Movement protein TGBp3 (72 aa).

At 1–2 the chain is on the lumenal side; the sequence is MS. The helical transmembrane segment at 3-23 threads the bilayer; sequence LSFSLIVFAVGVAVSIGVLTL. The Cytoplasmic portion of the chain corresponds to 24–72; the sequence is TTQQSSSYCLILVDGAKAVVEGCHLRQDIPAILSELKPASSPFNPLFCS.

Belongs to the Tymovirales TGBp3 protein family.

It localises to the host endoplasmic reticulum membrane. Functionally, plays a role in viral cell-to-cell propagation, by facilitating genome transport to neighboring plant cells through plasmosdesmata. May induce the formation of granular vesicles derived from the Endoplasmic reticulum, which align on actin filaments. This chain is Movement protein TGBp3 (ORF4), found in Lolium latent virus (isolate Lolium/USA/US1/-) (LoLV).